A 1390-amino-acid chain; its full sequence is DNA-directed RNA polymerase subunit beta (1390 aa).

This sequence belongs to the RNA polymerase beta chain family. The RNAP catalytic core consists of 2 alpha, 1 beta, 1 beta' and 1 omega subunit. When a sigma factor is associated with the core the holoenzyme is formed, which can initiate transcription.

The catalysed reaction is RNA(n) + a ribonucleoside 5'-triphosphate = RNA(n+1) + diphosphate. In terms of biological role, DNA-dependent RNA polymerase catalyzes the transcription of DNA into RNA using the four ribonucleoside triphosphates as substrates. The polypeptide is DNA-directed RNA polymerase subunit beta (Mycoplasma genitalium (strain ATCC 33530 / DSM 19775 / NCTC 10195 / G37) (Mycoplasmoides genitalium)).